The primary structure comprises 300 residues: Zinc finger CCCH domain-containing protein 14 (300 aa).

The tract at residues 1-38 (MEVGGRKRGKPDGANGAGGKRARESESFQTGVGSKSKP) is disordered. 2 C3H1-type zinc fingers span residues 33–61 (GSKSKPCTKFFSTSGCPFGEGCHFLHHFP) and 99–127 (TVKTRLCNKYNTAEGCKWGDKCHFAHGER). The region spanning 170–234 (SATAKISVDA…DQIKNASAMV (65 aa)) is the KH domain. The tract at residues 243-262 (GGAPPQGKKPVGGSHRGGGP) is disordered. The segment at 265–292 (NFKTKLCENFTKGSCTFGDRCHFAHGEN) adopts a C3H1-type 3 zinc-finger fold.

The sequence is that of Zinc finger CCCH domain-containing protein 14 from Oryza sativa subsp. japonica (Rice).